A 205-amino-acid chain; its full sequence is Bacterial microcompartment protein trimer-1 (205 aa).

Residues 1 to 20 are disordered; it reads MDHAPERFDATPPAGEPDRP. 2 BMC domains span residues 21 to 106 and 120 to 204; these read ALGV…RFLD and SVII…GRLF.

It belongs to the bacterial microcompartments protein family. In terms of assembly, homotrimerizes to form a pseudohexamer. Unlike its paralogs BMC-T2 and BMC-T3, the pseudohexamers do not stack. The concave side faces outward, with the N- and C-terminii exposed to the cytoplasm.

The protein resides in the bacterial microcompartment. Its function is as follows. A minor component of the bacterial microcompartment (BMC) shell. Expression of 5 proteins in E.coli (BMC-H (Hoch_5815), BMC-P (Hoch_5814), and 3 BMC-T (Hoch_5812, Hoch_5816, Hoch_3341)) forms 40 nm artificial BMCs with a molecular mass of 6.5 MDa. This protein does not form stacked pseudohexamers in the BMC. There are 20 BMC-T pseudohexamers per BMC, composed of mixed BMC-T1, BMC-T2 and BMC-T3. The shell facets are 20-30 Angstroms thick, with 1 of BMC-T trimers protruding to the exterior. This Haliangium ochraceum (strain DSM 14365 / JCM 11303 / SMP-2) protein is Bacterial microcompartment protein trimer-1.